We begin with the raw amino-acid sequence, 265 residues long: Bidirectional sugar transporter NEC1 (265 aa).

The Extracellular segment spans residues 1-8 (MAQLRADD). A helical membrane pass occupies residues 9 to 29 (LSFIFGLLGNIVSFMVFLAPV). The 87-residue stretch at 11–97 (FIFGLLGNIV…SLFLFYAPRK (87 aa)) folds into the MtN3/slv 1 domain. Residues 30 to 44 (PTFYKIYKRKSSEGY) lie on the Cytoplasmic side of the membrane. The helical transmembrane segment at 45-65 (QAIPYMVALFSAGLLLYYAYL) threads the bilayer. Residues 66 to 71 (RKNAYL) are Extracellular-facing. A helical transmembrane segment spans residues 72–92 (IVSINGFGCAIELTYISLFLF). At 93 to 103 (YAPRKSKIFTG) the chain is on the cytoplasmic side. A helical membrane pass occupies residues 104-124 (WLMLLELGALGMVMPITYLLA). Residues 125 to 130 (EGSHRV) lie on the Extracellular side of the membrane. A helical transmembrane segment spans residues 131-151 (MIVGWICAAINVAVFAAPLSI). Residues 132–216 (IVGWICAAIN…LLYFVYKDSK (85 aa)) enclose the MtN3/slv 2 domain. The Cytoplasmic portion of the chain corresponds to 152-164 (MRQVIKTKSVEFM). Residues 165-185 (PFTLSLFLTLCATMWFFYGFF) traverse the membrane as a helical segment. Residues 186–190 (KKDFY) lie on the Extracellular side of the membrane. Residues 191–211 (IAFPNILGFLFGIVQMLLYFV) form a helical membrane-spanning segment. Over 212–265 (YKDSKRIDDEKSDPVREATKSKEGVEIIINIEDDNSDNALQSMEKDFSRLRTSK) the chain is Cytoplasmic.

This sequence belongs to the SWEET sugar transporter family. Forms homooligomers and/or heterooligomers. In terms of tissue distribution, highly expressed in nectary tissue and weakly in the stamen, especially in stomium cells and in the upper part of the filaments.

It is found in the cell membrane. Its function is as follows. Mediates both low-affinity uptake and efflux of sugar across the plasma membrane. Promotes the formation of phloem bundles in mid-veins. Probably involved in the development of stomium cells that control anther opening time. Required for pollen viability. In Petunia hybrida (Petunia), this protein is Bidirectional sugar transporter NEC1 (NEC1).